Consider the following 111-residue polypeptide: Ghrelin (111 aa).

Positions 1-26 are cleaved as a signal peptide; that stretch reads MRQMKRTAYIILLVCVLALWMDSVQA. Residues 28–37 are compositionally biased toward polar residues; it reads SSFLSPSQRP. The interval 28 to 53 is disordered; that stretch reads SSFLSPSQRPQGKDKKPPRVGRRDSD. A lipid anchor (O-decanoyl serine; alternate) is attached at Ser-29. Ser-29 is lipidated: O-hexanoyl serine; alternate. Residue Ser-29 is the site of O-octanoyl serine; alternate attachment. Residues 38 to 53 show a composition bias toward basic and acidic residues; it reads QGKDKKPPRVGRRDSD. At Val-47 the chain carries Valine amide. Positions 51 to 111 are cleaved as a propeptide — removed in mature form; it reads DSDGILDLFM…DLLMDTPAKE (61 aa).

The protein belongs to the motilin family. O-octanoylated by GOAT/MBOAT4. O-octanoylation or O-decanoylation is essential for activity. The O-decanoylated form ghrelin-21-C10 differs in the length of the carbon backbone of the carboxylic acid forming an ester bond with Ser-29. 44% of eel ghrelin is O-decanoylated. In terms of tissue distribution, highest levels in stomach and anterior intestine. Lower levels in posterior intestine, kidney and brain. Low levels in heart, head kidney and middle intestine.

It is found in the secreted. Functionally, ligand for growth hormone secretagogue receptor type 1 (GHSR). Induces the release of growth hormone from the pituitary. Has an appetite-stimulating effect, induces adiposity and stimulates gastric acid secretion. Involved in growth regulation. This chain is Ghrelin (ghrl), found in Anguilla japonica (Japanese eel).